Consider the following 1704-residue polypeptide: Arf-GAP with Rho-GAP domain, ANK repeat and PH domain-containing protein 2 (1704 aa).

Positions 6-70 (EVNVDIKDFL…LKQLQIILSK (65 aa)) constitute an SAM domain. Y77 carries the phosphotyrosine modification. A disordered region spans residues 126 to 161 (NLEDSDASVERSQYPQSDDKLSPPKRDFPTAEEPHL). Positions 142-160 (SDDKLSPPKRDFPTAEEPH) are enriched in basic and acidic residues. PH domains lie at 482–574 (KKVK…NALK) and 587–679 (TPEK…QSIA). Residues 676–811 (QSIAETLSDY…TLLASLTKEE (136 aa)) enclose the Arf-GAP domain. The segment at 700 to 723 (CADCKAPDPDWASINLCVVICKKC) adopts a C4-type zinc-finger fold. 2 consecutive PH domains span residues 878-1003 (DIHS…KHFV) and 1014-1114 (DYDL…AGTD). The region spanning 1116–1297 (NALQDQQLSK…DLINNYVEIF (182 aa)) is the Rho-GAP domain. A Ras-associating domain is found at 1326–1420 (GDLLIEVYVE…AYLVVKRFLT (95 aa)). The PH 5 domain maps to 1434-1537 (GSIKEGILKI…WMTSIFIAQH (104 aa)). S1632 is subject to Phosphoserine. The disordered stretch occupies residues 1636–1675 (LEDTEPEAPLGQPKGHKGLKTLRKTEDRNSKATLDSDHKL). Positions 1658–1675 (RKTEDRNSKATLDSDHKL) are enriched in basic and acidic residues.

As to expression, detected in brain, thymus, lymph node, thyroid, spinal cord, trachea, heart, skeletal muscle, spleen, kidney, liver, placenta, lung and peripheral blood leukocytes.

It localises to the cytoplasm. Functionally, phosphatidylinositol 3,4,5-trisphosphate-dependent GTPase-activating protein that modulates actin cytoskeleton remodeling by regulating ARF and RHO family members. Is activated by phosphatidylinositol 3,4,5-trisphosphate (PtdIns(3,4,5)P3) binding. Can be activated by phosphatidylinositol 3,4-bisphosphate (PtdIns(3,4,5)P2) binding, albeit with lower efficiency. The sequence is that of Arf-GAP with Rho-GAP domain, ANK repeat and PH domain-containing protein 2 (ARAP2) from Homo sapiens (Human).